The primary structure comprises 111 residues: Ribosome-binding factor A (111 aa).

It belongs to the RbfA family. In terms of assembly, monomer. Binds 30S ribosomal subunits, but not 50S ribosomal subunits or 70S ribosomes.

It localises to the cytoplasm. One of several proteins that assist in the late maturation steps of the functional core of the 30S ribosomal subunit. Associates with free 30S ribosomal subunits (but not with 30S subunits that are part of 70S ribosomes or polysomes). Required for efficient processing of 16S rRNA. May interact with the 5'-terminal helix region of 16S rRNA. This Helicobacter pylori (strain J99 / ATCC 700824) (Campylobacter pylori J99) protein is Ribosome-binding factor A.